The chain runs to 35 residues: uncharacterized protein (35 aa).

A helical transmembrane segment spans residues 14–34; sequence LAHLIGIIYLIIILGTLVMLF.

The protein resides in the endoplasmic reticulum membrane. This is an uncharacterized protein from Saccharomyces cerevisiae (strain ATCC 204508 / S288c) (Baker's yeast).